The chain runs to 96 residues: Large ribosomal subunit protein bL28 (96 aa).

Residues 1 to 22 are disordered; sequence MSRRCELTGKGPMTGNNVSHAN.

This sequence belongs to the bacterial ribosomal protein bL28 family.

This chain is Large ribosomal subunit protein bL28, found in Ruegeria sp. (strain TM1040) (Silicibacter sp.).